The chain runs to 510 residues: Chorion transcription factor Cf2 (510 aa).

The span at 1-10 shows a compositional bias: polar residues; the sequence is MIKSTTNPQE. Residues 1-40 form a disordered region; that stretch reads MIKSTTNPQEQRLPRPEDQSPAPPPPPPSSATTSTAAPAT. The segment covering 30 to 40 has biased composition (low complexity); the sequence is SATTSTAAPAT. 2 C2H2-type zinc fingers span residues 74–97 and 125–148; these read HYCP…QLCH and HPCF…RLAH. Positions 222-237 are enriched in basic and acidic residues; it reads PEEQHHQQQLQAEHHH. The segment at 222–279 is disordered; that stretch reads PEEQHHQQQLQAEHHHQQQHQQQQQQQQQQQELLEQQQREMQEQAQQQQVHHHQQDQD. Low complexity predominate over residues 240-257; that stretch reads QHQQQQQQQQQQQELLEQ. 5 C2H2-type zinc fingers span residues 366 to 388, 401 to 423, 429 to 451, 457 to 479, and 485 to 508; these read HKCP…RKIH, YTCS…TRIH, FRCG…LTTH, FHCG…IRTH, and YTCP…TKLH.

As to expression, isoform I is found in embryos, pupae and adult somatic tissue; isoform II occurs in embryos, pupae, ovaries, testis and to a lesser extent in adult somatic tissue.

It is found in the nucleus. Its function is as follows. Transcriptional regulator; binds to the promoter region of Cp15. Also binds to its own promoter, thus having a probable autoregulatory role. The polypeptide is Chorion transcription factor Cf2 (Cf2) (Drosophila melanogaster (Fruit fly)).